The sequence spans 411 residues: Anaerobic nitric oxide reductase flavorubredoxin homolog (411 aa).

The interval 30-210 (LRGSSYNSYL…PFSRLVTPKI (181 aa)) is zinc metallo-hydrolase. Residues His79, Glu81, Asp83, His147, Asp166, His227, Cys360, Cys363, Cys393, and Cys396 each coordinate Fe cation. The Rubredoxin-like domain maps to 355–406 (GPRMQCSVCQWIYDPAKGEPMQDVAPGTPWSEVPDNFLCPECSLGKDVFDEL).

This sequence in the N-terminal section; belongs to the zinc metallo-hydrolase group 3 family. As to quaternary structure, homotetramer. It depends on Fe cation as a cofactor.

The protein resides in the cytoplasm. Its pathway is nitrogen metabolism; nitric oxide reduction. Functionally, anaerobic nitric oxide reductase; uses NADH to detoxify nitric oxide (NO), protecting several 4Fe-4S NO-sensitive enzymes. Has at least 2 reductase partners, only one of which (NorW, flavorubredoxin reductase) has been identified. NO probably binds to the di-iron center. Also able to function as an aerobic oxygen reductase. This is Anaerobic nitric oxide reductase flavorubredoxin homolog from Escherichia coli O157:H7.